The sequence spans 106 residues: Tubulin-specific chaperone A (106 aa).

S94 carries the phosphoserine modification.

This sequence belongs to the TBCA family.

It localises to the cytoplasm. The protein resides in the cytoskeleton. Its function is as follows. Tubulin-folding protein; involved in the early step of the tubulin folding pathway. The protein is Tubulin-specific chaperone A (RBL2) of Saccharomyces cerevisiae (strain ATCC 204508 / S288c) (Baker's yeast).